A 425-amino-acid chain; its full sequence is D-amino acid dehydrogenase 2 (425 aa).

Residue 3 to 17 participates in FAD binding; the sequence is ITVVGAGIVGISTAY.

Belongs to the DadA oxidoreductase family. It depends on FAD as a cofactor.

It catalyses the reaction a D-alpha-amino acid + A + H2O = a 2-oxocarboxylate + AH2 + NH4(+). Functionally, oxidative deamination of D-amino acids. The polypeptide is D-amino acid dehydrogenase 2 (dadA2) (Ralstonia nicotianae (strain ATCC BAA-1114 / GMI1000) (Ralstonia solanacearum)).